The primary structure comprises 512 residues: GMP synthase [glutamine-hydrolyzing] (512 aa).

Residues 6 to 195 (KIIILDFGSQ…VFNICGCQPK (190 aa)) enclose the Glutamine amidotransferase type-1 domain. The active-site Nucleophile is Cys83. Residues His169 and Glu171 contribute to the active site. The GMPS ATP-PPase domain occupies 196 to 387 (WKITEFISAA…LGIDFKFVYK (192 aa)). Residue 223–229 (SGGVDSS) coordinates ATP.

As to quaternary structure, homodimer.

It catalyses the reaction XMP + L-glutamine + ATP + H2O = GMP + L-glutamate + AMP + diphosphate + 2 H(+). It functions in the pathway purine metabolism; GMP biosynthesis; GMP from XMP (L-Gln route): step 1/1. Its function is as follows. Catalyzes the synthesis of GMP from XMP. This chain is GMP synthase [glutamine-hydrolyzing], found in Spiroplasma kunkelii.